Reading from the N-terminus, the 129-residue chain is Small ribosomal subunit protein uS11 (129 aa).

The protein belongs to the universal ribosomal protein uS11 family. In terms of assembly, part of the 30S ribosomal subunit. Interacts with proteins S7 and S18. Binds to IF-3.

In terms of biological role, located on the platform of the 30S subunit, it bridges several disparate RNA helices of the 16S rRNA. Forms part of the Shine-Dalgarno cleft in the 70S ribosome. The polypeptide is Small ribosomal subunit protein uS11 (Lawsonia intracellularis (strain PHE/MN1-00)).